The following is a 243-amino-acid chain: PF03932 family protein CutC (243 aa).

It belongs to the CutC family.

The protein localises to the cytoplasm. This Glaesserella parasuis serovar 5 (strain SH0165) (Haemophilus parasuis) protein is PF03932 family protein CutC.